The sequence spans 142 residues: HTH-type transcriptional regulator MntR (142 aa).

The HTH dtxR-type domain occupies 1–63; it reads MPTPSMEDYI…YEKYRGLVLT (63 aa). Mn(2+) is bound by residues D8, E11, H77, E99, E102, and H103.

This sequence belongs to the DtxR/MntR family. In terms of assembly, homodimer.

Its subcellular location is the cytoplasm. DNA binding is strongly activated by Mn(2+). Its function is as follows. Central regulator of manganese homeostasis. This Bacillus mycoides (strain KBAB4) (Bacillus weihenstephanensis) protein is HTH-type transcriptional regulator MntR.